Reading from the N-terminus, the 507-residue chain is MGPPLAQELTQACNQPLAATSNLQPDDGYKIELRAENTVDKYPAKQHARRVAAQIRQGKGLIFLMGQKSTLHEDSDQERSLRQRRYFFYLSGVDEADCDLTYDIKTDKLTLYVPDFDLRRAIWMGPTLERKAALQKFDVDEVNYHSSLDEDVKKWAKNQDPGSTIYLLHGSQGPAENPPNVIIDSKALKLAMDACRVIKDEHEIQLIRRANDISAAAHLEILRGITSMSNESHIEGSFLNTCVSLGAHNQAYQIIAASGSNAATLHYSKNNEPLKGRQFVCLDAGAEWNCYASDVTRTFPITHQWPSIEAKQIYQLVQEMQESCIALVKEGVRYLDLHFLAHNILIKGFLTLGIFKGGTLDEVKKSGASLLFFPHGLGHHIGLEVHDVSPQSIMAQGINDDSNNKLILPTCVSPCTTSSPALTSGMVITIEPGIYFSQLALDNAKPEQLKYIDMARVKNYMAVGGVRIEDDILVTKTGHENLTKVPKGDDMLEIIRQGKKGNDSHHV.

Mn(2+) is bound by residues D283, D294, E431, and E469.

Belongs to the peptidase M24B family. Mn(2+) is required as a cofactor.

The enzyme catalyses Release of any N-terminal amino acid, including proline, that is linked to proline, even from a dipeptide or tripeptide.. Functionally, catalyzes the removal of a penultimate prolyl residue from the N-termini of peptides. The protein is Probable Xaa-Pro aminopeptidase HCBG_01484 of Ajellomyces capsulatus (strain G186AR / H82 / ATCC MYA-2454 / RMSCC 2432) (Darling's disease fungus).